Reading from the N-terminus, the 133-residue chain is Large-conductance mechanosensitive channel (133 aa).

Helical transmembrane passes span 10-30 and 76-96; these read FAMK…TAFG and GNFI…FCVI.

Belongs to the MscL family. As to quaternary structure, homopentamer.

It localises to the cell inner membrane. Functionally, channel that opens in response to stretch forces in the membrane lipid bilayer. May participate in the regulation of osmotic pressure changes within the cell. The chain is Large-conductance mechanosensitive channel from Campylobacter curvus (strain 525.92).